Here is a 460-residue protein sequence, read N- to C-terminus: Muscarinic acetylcholine receptor M1 (460 aa).

Residues 1 to 22 (MNTSAPPAVSPNITVLAPGKGP) lie on the Extracellular side of the membrane. N-linked (GlcNAc...) asparagine glycosylation is found at asparagine 2 and asparagine 12. Residues 23 to 48 (WQVAFIGITTGLLSLATVTGNLLVLI) traverse the membrane as a helical segment. Over 49-62 (SFKVNTELKTVNNY) the chain is Cytoplasmic. Residues 63–84 (FLLSLACADLIIGTFSMNLYTT) traverse the membrane as a helical segment. The Extracellular segment spans residues 85–95 (YLLMGHWALGT). Residues 96–121 (LACDLWLALDYVASNASVMNLLLISF) traverse the membrane as a helical segment. An intrachain disulfide couples cysteine 98 to cysteine 178. Topologically, residues 122–142 (DRYFSVTRPLSYRAKRTPRRA) are cytoplasmic. The helical transmembrane segment at 143 to 164 (ALMIGLAWLVSFVLWAPAILFW) threads the bilayer. Topologically, residues 165–185 (QYLVGERTVLAGQCYIQFLSQ) are extracellular. A helical membrane pass occupies residues 186–209 (PIITFGTAMAAFYLPVTVMCTLYW). The Cytoplasmic portion of the chain corresponds to 210-366 (RIYRETENRA…LVKEKKAART (157 aa)). 3 disordered regions span residues 225 to 256 (LQGS…ETPP), 274 to 297 (WKEE…EEPG), and 310 to 351 (EAQA…QLAK). Threonine 230 bears the Phosphothreonine mark. Low complexity predominate over residues 238 to 247 (SSSSERSQPG). Residues 328-343 (RPTKKGRDRAGKGQKP) are compositionally biased toward basic residues. Residues 367 to 390 (LSAILLAFILTWTPYNIMVLVSTF) traverse the membrane as a helical segment. Residues 391–397 (CKDCVPE) are Extracellular-facing. Residues 398-420 (TLWELGYWLCYVNSTINPMCYAL) traverse the membrane as a helical segment. Topologically, residues 421-460 (CNKAFRDTFRLLLLCRWDKRRWRKIPKRPGSVHRTPSRQC) are cytoplasmic. Position 428 is a phosphothreonine (threonine 428). Serine 451 is modified (phosphoserine). Threonine 455 bears the Phosphothreonine mark. The residue at position 457 (serine 457) is a Phosphoserine.

It belongs to the G-protein coupled receptor 1 family. Muscarinic acetylcholine receptor subfamily. CHRM1 sub-subfamily. As to quaternary structure, interacts with GPRASP2. Interacts with TMEM147.

The protein resides in the cell membrane. The protein localises to the postsynaptic cell membrane. The muscarinic acetylcholine receptor mediates various cellular responses, including inhibition of adenylate cyclase, breakdown of phosphoinositides and modulation of potassium channels through the action of G proteins. Primary transducing effect is Pi turnover. The protein is Muscarinic acetylcholine receptor M1 (CHRM1) of Homo sapiens (Human).